Reading from the N-terminus, the 441-residue chain is Glutamate--tRNA ligase 2 (441 aa).

Residues 8 to 18 (PSPTGYIHVGN) carry the 'HIGH' region motif. Residues 239 to 243 (ALSKR) carry the 'KMSKS' region motif. Position 242 (Lys-242) interacts with ATP.

This sequence belongs to the class-I aminoacyl-tRNA synthetase family. Glutamate--tRNA ligase type 1 subfamily. Monomer.

Its subcellular location is the cytoplasm. The enzyme catalyses tRNA(Glu) + L-glutamate + ATP = L-glutamyl-tRNA(Glu) + AMP + diphosphate. In terms of biological role, catalyzes the attachment of glutamate to tRNA(Glu) in a two-step reaction: glutamate is first activated by ATP to form Glu-AMP and then transferred to the acceptor end of tRNA(Glu). This is Glutamate--tRNA ligase 2 from Ruegeria sp. (strain TM1040) (Silicibacter sp.).